The sequence spans 487 residues: Cytochrome P450 2C5 (487 aa).

Residue Cys432 coordinates heme.

This sequence belongs to the cytochrome P450 family. It depends on heme as a cofactor.

It localises to the endoplasmic reticulum membrane. The protein resides in the microsome membrane. The enzyme catalyses an organic molecule + reduced [NADPH--hemoprotein reductase] + O2 = an alcohol + oxidized [NADPH--hemoprotein reductase] + H2O + H(+). In terms of biological role, cytochromes P450 are a group of heme-thiolate monooxygenases. In liver microsomes, this enzyme is involved in an NADPH-dependent electron transport pathway. It oxidizes a variety of structurally unrelated compounds, including steroids, fatty acids, and xenobiotics. This chain is Cytochrome P450 2C5 (CYP2C5), found in Oryctolagus cuniculus (Rabbit).